Consider the following 425-residue polypeptide: Serine--tRNA ligase (425 aa).

230 to 232 contacts L-serine; the sequence is TSE. ATP-binding positions include 261–263 and Val277; that span reads RRE. Position 284 (Glu284) interacts with L-serine. Residue 348 to 351 participates in ATP binding; it reads ELTS. Thr382 is a binding site for L-serine.

Belongs to the class-II aminoacyl-tRNA synthetase family. Type-1 seryl-tRNA synthetase subfamily. Homodimer. The tRNA molecule binds across the dimer.

The protein resides in the cytoplasm. The enzyme catalyses tRNA(Ser) + L-serine + ATP = L-seryl-tRNA(Ser) + AMP + diphosphate + H(+). It catalyses the reaction tRNA(Sec) + L-serine + ATP = L-seryl-tRNA(Sec) + AMP + diphosphate + H(+). Its pathway is aminoacyl-tRNA biosynthesis; selenocysteinyl-tRNA(Sec) biosynthesis; L-seryl-tRNA(Sec) from L-serine and tRNA(Sec): step 1/1. Its function is as follows. Catalyzes the attachment of serine to tRNA(Ser). Is also able to aminoacylate tRNA(Sec) with serine, to form the misacylated tRNA L-seryl-tRNA(Sec), which will be further converted into selenocysteinyl-tRNA(Sec). In Streptomyces coelicolor (strain ATCC BAA-471 / A3(2) / M145), this protein is Serine--tRNA ligase.